We begin with the raw amino-acid sequence, 261 residues long: Type III pantothenate kinase (261 aa).

Residue 6 to 13 (DAGNTNVV) participates in ATP binding. Position 108-111 (108-111 (GADR)) interacts with substrate. Aspartate 110 functions as the Proton acceptor in the catalytic mechanism. Aspartate 130 is a K(+) binding site. Residue threonine 133 participates in ATP binding. Threonine 185 serves as a coordination point for substrate.

This sequence belongs to the type III pantothenate kinase family. Homodimer. Requires NH4(+) as cofactor. K(+) is required as a cofactor.

Its subcellular location is the cytoplasm. It carries out the reaction (R)-pantothenate + ATP = (R)-4'-phosphopantothenate + ADP + H(+). The protein operates within cofactor biosynthesis; coenzyme A biosynthesis; CoA from (R)-pantothenate: step 1/5. Catalyzes the phosphorylation of pantothenate (Pan), the first step in CoA biosynthesis. The chain is Type III pantothenate kinase from Rhodospirillum centenum (strain ATCC 51521 / SW).